A 286-amino-acid chain; its full sequence is Aminoglycoside N(3)-acetyltransferase III (286 aa).

This sequence belongs to the antibiotic N-acetyltransferase family.

The enzyme catalyses a 2-deoxystreptamine antibiotic + acetyl-CoA = an N(3)-acetyl-2-deoxystreptamine antibiotic + CoA + H(+). Functionally, resistance to antibiotics containing the 2-deoxy-streptamine ring including gentamicin, kanamycin, tobramycin, neomycin and apramycin. The sequence is that of Aminoglycoside N(3)-acetyltransferase III (aacC3) from Salmonella sp.